Here is a 347-residue protein sequence, read N- to C-terminus: 4-hydroxy-2-oxovalerate aldolase 2 (347 aa).

The Pyruvate carboxyltransferase domain maps to 7-259 (VRITDTSLRD…KTGIDFFDIA (253 aa)). 15 to 16 (RD) contacts substrate. A Mn(2+)-binding site is contributed by D16. H19 (proton acceptor) is an active-site residue. S169 and H198 together coordinate substrate. Positions 198 and 200 each coordinate Mn(2+). Y289 is a binding site for substrate.

It belongs to the 4-hydroxy-2-oxovalerate aldolase family.

It catalyses the reaction (S)-4-hydroxy-2-oxopentanoate = acetaldehyde + pyruvate. This chain is 4-hydroxy-2-oxovalerate aldolase 2, found in Mycobacterium marinum (strain ATCC BAA-535 / M).